The sequence spans 96 residues: Large ribosomal subunit protein uL23 (96 aa).

Belongs to the universal ribosomal protein uL23 family. In terms of assembly, part of the 50S ribosomal subunit. Contacts protein L29, and trigger factor when it is bound to the ribosome.

In terms of biological role, one of the early assembly proteins it binds 23S rRNA. One of the proteins that surrounds the polypeptide exit tunnel on the outside of the ribosome. Forms the main docking site for trigger factor binding to the ribosome. The protein is Large ribosomal subunit protein uL23 of Aster yellows witches'-broom phytoplasma (strain AYWB).